We begin with the raw amino-acid sequence, 282 residues long: NADPH-dependent 7-cyano-7-deazaguanine reductase (282 aa).

88–90 is a binding site for substrate; that stretch reads IES. 90 to 91 is an NADPH binding site; the sequence is SK. The active-site Thioimide intermediate is cysteine 190. The active-site Proton donor is the aspartate 197. Substrate is bound at residue 229–230; that stretch reads HE. 258–259 is an NADPH binding site; it reads RG.

The protein belongs to the GTP cyclohydrolase I family. QueF type 2 subfamily. Homodimer.

The protein localises to the cytoplasm. It carries out the reaction 7-aminomethyl-7-carbaguanine + 2 NADP(+) = 7-cyano-7-deazaguanine + 2 NADPH + 3 H(+). Its pathway is tRNA modification; tRNA-queuosine biosynthesis. Its function is as follows. Catalyzes the NADPH-dependent reduction of 7-cyano-7-deazaguanine (preQ0) to 7-aminomethyl-7-deazaguanine (preQ1). The protein is NADPH-dependent 7-cyano-7-deazaguanine reductase of Salmonella paratyphi C (strain RKS4594).